The chain runs to 179 residues: Large ribosomal subunit protein uL6 (179 aa).

The protein belongs to the universal ribosomal protein uL6 family. As to quaternary structure, part of the 50S ribosomal subunit.

This protein binds to the 23S rRNA, and is important in its secondary structure. It is located near the subunit interface in the base of the L7/L12 stalk, and near the tRNA binding site of the peptidyltransferase center. In Rhodococcus jostii (strain RHA1), this protein is Large ribosomal subunit protein uL6.